The sequence spans 365 residues: G-protein coupled receptor 4 (365 aa).

Residues 1 to 10 (MDNSTGTWEG) are Extracellular-facing. Asn-3 carries an N-linked (GlcNAc...) asparagine glycan. The chain crosses the membrane as a helical span at residues 11–47 (CHVDSRVDHLFPPSLYIFVIGVGLPTNCLALWAAYRQ). Intrachain disulfides connect Cys-11–Cys-260 and Cys-92–Cys-170. The Cytoplasmic segment spans residues 48 to 51 (VRQR). Residues 52-82 (NELGVYLMNLSIADLLYICTLPLWVDYFLHH) form a helical membrane-spanning segment. The Extracellular portion of the chain corresponds to 83-87 (DNWIH). A helical transmembrane segment spans residues 88–123 (GPGSCKLFGFIFYSNIYISIAFLCCISVDRYLAVAH). At 124 to 131 (PLRFARLR) the chain is on the cytoplasmic side. A helical membrane pass occupies residues 132–158 (RVKTAVAVSSVVWATELGANSAPLFHD). Residues 159 to 174 (ELFRDRYNHTFCFEKF) lie on the Extracellular side of the membrane. The interval 159–174 (ELFRDRYNHTFCFEKF) is extracellular loop 2 (ECL2). N-linked (GlcNAc...) asparagine glycosylation is present at Asn-166. The chain crosses the membrane as a helical span at residues 175–212 (PMERWVAWMNLYRVFVGFLFPWALMLLCYRGILRAVQS). Residues 213–216 (SVST) lie on the Cytoplasmic side of the membrane. A helical membrane pass occupies residues 217-252 (ERQEKVKIKRLALSLIAIVLVCFAPYHALLLSRSAV). At 253–262 (YLGRPWDCGF) the chain is on the extracellular side. The chain crosses the membrane as a helical span at residues 263 to 291 (EERVFSAYHSSLAFTSLNCVADPILYCLV). The Cytoplasmic segment spans residues 292-365 (NEGARSDVAK…PLKVLLPPAQ (74 aa)).

This sequence belongs to the G-protein coupled receptor 1 family.

It is found in the cell membrane. With respect to regulation, activated by a network of residues that connects an extracellular-facing cavity to Glu-147, a conserved charged residue buried in the transmembrane core of the receptor. Protonation likely drives conformational changes in extracellular loop 2 (ECL2), which stabilizes movement of transmembrane 3 (TM3) and a series of rearrangements that connect the extracellular-facing cavity to Glu-147, a residue only conserved in proton-sensing G-protein coupled receptors. In terms of biological role, proton-sensing G-protein coupled receptor activated by extracellular pH, which is required to monitor pH changes and generate adaptive reactions. Activated by an optimal pH of 6.8-7.2. Ligand binding causes a conformation change that triggers signaling via guanine nucleotide-binding proteins (G proteins) and modulates the activity of downstream effectors, such as adenylate cyclase. GPR4 is mainly coupled to G(s) G proteins and mediates activation of adenylate cyclase activity. May also couple with G(q) and G(12)/G(13) G proteins. Acts as a key regulator of respiratory sensitivity to CO2/H(+) in brain retrotrapezoid nucleus neurons: acts by mediating detection of protons generated by the formation of carbonic acid in the blood, an important mechanism to impulse to breathe. Also acts as a regulator of acid secretion in the kidney collecting duct by maintaining acid-base homeostasis in the kidney. Acidosis-induced GPR4 activation increases paracellular gap formation and permeability of vascular endothelial cells, possibly through the G(12)/G(13)/Rho GTPase signaling pathway. This is G-protein coupled receptor 4 from Rattus norvegicus (Rat).